We begin with the raw amino-acid sequence, 337 residues long: DNA-directed RNA polymerase subunit alpha (337 aa).

Positions 1 to 233 (MVREEVVGST…DLFIPFLHAE (233 aa)) are alpha N-terminal domain (alpha-NTD). The interval 265 to 337 (KEIALKCIFI…FAIDLPKNKF (73 aa)) is alpha C-terminal domain (alpha-CTD).

The protein belongs to the RNA polymerase alpha chain family. As to quaternary structure, in plastids the minimal PEP RNA polymerase catalytic core is composed of four subunits: alpha, beta, beta', and beta''. When a (nuclear-encoded) sigma factor is associated with the core the holoenzyme is formed, which can initiate transcription.

It is found in the plastid. The protein localises to the chloroplast. The enzyme catalyses RNA(n) + a ribonucleoside 5'-triphosphate = RNA(n+1) + diphosphate. Its function is as follows. DNA-dependent RNA polymerase catalyzes the transcription of DNA into RNA using the four ribonucleoside triphosphates as substrates. The chain is DNA-directed RNA polymerase subunit alpha from Acorus calamus (Sweet flag).